We begin with the raw amino-acid sequence, 520 residues long: Cytochrome P450 monooxygenase 98 (520 aa).

The chain crosses the membrane as a helical span at residues 7 to 27 (MLNNNLLIVIGTFAVCVYIVL). Residue Cys-445 coordinates heme.

It belongs to the cytochrome P450 family. The cofactor is heme.

The protein localises to the membrane. The protein operates within secondary metabolite biosynthesis. Cytochrome P450 monooxygenase that is able to use pyrene, phenanthrene, 3,5-dimethoxy-trans-stilbene and 3,5,4'-trimethoxy-trans-stilbene as substrates for oxidation. This Postia placenta (strain ATCC 44394 / Madison 698-R) (Brown rot fungus) protein is Cytochrome P450 monooxygenase 98.